A 333-amino-acid polypeptide reads, in one-letter code: Ribosomal RNA large subunit methyltransferase F (333 aa).

Residues 1 to 10 (MPQPPKRPRK) show a composition bias toward basic residues. The interval 1-31 (MPQPPKRPRKPAPAAVKTAPAKGELHPRNRH) is disordered. The span at 12–22 (APAAVKTAPAK) shows a compositional bias: low complexity.

It belongs to the methyltransferase superfamily. METTL16/RlmF family.

The protein localises to the cytoplasm. The enzyme catalyses adenosine(1618) in 23S rRNA + S-adenosyl-L-methionine = N(6)-methyladenosine(1618) in 23S rRNA + S-adenosyl-L-homocysteine + H(+). In terms of biological role, specifically methylates the adenine in position 1618 of 23S rRNA. This Ectopseudomonas mendocina (strain ymp) (Pseudomonas mendocina) protein is Ribosomal RNA large subunit methyltransferase F.